The chain runs to 122 residues: Large ribosomal subunit protein uL14 (122 aa).

The protein belongs to the universal ribosomal protein uL14 family. In terms of assembly, part of the 50S ribosomal subunit. Forms a cluster with proteins L3 and L19. In the 70S ribosome, L14 and L19 interact and together make contacts with the 16S rRNA in bridges B5 and B8.

Functionally, binds to 23S rRNA. Forms part of two intersubunit bridges in the 70S ribosome. This chain is Large ribosomal subunit protein uL14, found in Treponema denticola (strain ATCC 35405 / DSM 14222 / CIP 103919 / JCM 8153 / KCTC 15104).